Reading from the N-terminus, the 110-residue chain is UPF0122 protein LMOf2365_1829 (110 aa).

It belongs to the UPF0122 family.

Might take part in the signal recognition particle (SRP) pathway. This is inferred from the conservation of its genetic proximity to ftsY/ffh. May be a regulatory protein. This chain is UPF0122 protein LMOf2365_1829, found in Listeria monocytogenes serotype 4b (strain F2365).